A 543-amino-acid polypeptide reads, in one-letter code: Phenylalanine--tRNA ligase beta subunit (543 aa).

Residues 269–344 (FDFRIMRPAR…KSKGIENIEE (76 aa)) form the B5 domain. Residues Asp-322, Asp-328, Glu-331, and Asp-332 each coordinate Mg(2+).

The protein belongs to the phenylalanyl-tRNA synthetase beta subunit family. Type 2 subfamily. In terms of assembly, tetramer of two alpha and two beta subunits. Mg(2+) serves as cofactor.

Its subcellular location is the cytoplasm. It carries out the reaction tRNA(Phe) + L-phenylalanine + ATP = L-phenylalanyl-tRNA(Phe) + AMP + diphosphate + H(+). This is Phenylalanine--tRNA ligase beta subunit from Thermoplasma acidophilum (strain ATCC 25905 / DSM 1728 / JCM 9062 / NBRC 15155 / AMRC-C165).